Consider the following 66-residue polypeptide: Prokaryotic ubiquitin-like protein UBact (66 aa).

Residues 1–66 (MNMRYTLMPE…AERYRQRTGE (66 aa)) form a disordered region. A compositionally biased stretch (basic and acidic residues) spans 30 to 66 (GGPRRPETGSPDKDNLLKRMRKVDPKQAERYRQRTGE). Residue glutamate 66 forms an Isoglutamyl lysine isopeptide (Glu-Lys) (interchain with K-? in acceptor proteins) linkage.

It belongs to the ubiquitin-like protein UBact family.

Functionally, may function as a protein modifier covalently attached to lysine residues of substrate proteins. This may serve to target the modified proteins for degradation by proteasomes. This chain is Prokaryotic ubiquitin-like protein UBact, found in Nitrospira moscoviensis.